The following is a 194-amino-acid chain: Putative manganese efflux pump MntP (194 aa).

6 helical membrane-spanning segments follow: residues 3–23 (PITI…AAIG), 37–57 (LYVA…GWLL), 65–85 (IAAF…IHMI), 112–132 (LAAT…SLAF), 137–157 (IGIV…FGVM), and 170–190 (AEIV…YEHL).

It belongs to the MntP (TC 9.B.29) family.

The protein localises to the cell inner membrane. Probably functions as a manganese efflux pump. This Xylella fastidiosa (strain M12) protein is Putative manganese efflux pump MntP.